Reading from the N-terminus, the 326-residue chain is Deoxyuridine 5'-triphosphate nucleotidohydrolase (326 aa).

Residues 218 to 220 (RSS) and 321 to 322 (FG) each bind substrate.

Belongs to the dUTPase family. The cofactor is Mg(2+).

The catalysed reaction is dUTP + H2O = dUMP + diphosphate + H(+). Functionally, involved in nucleotide metabolism: produces dUMP, the immediate precursor of thymidine nucleotides and decreases the intracellular concentration of dUTP to avoid uracil incorporation into viral DNA. The chain is Deoxyuridine 5'-triphosphate nucleotidohydrolase from Equus caballus (Horse).